The sequence spans 838 residues: Pentatricopeptide repeat-containing protein At4g19440, chloroplastic (838 aa).

Residues 1–32 (MAALLYFPKISSQMTSSHFISFSPMDLRRLSR) constitute a chloroplast transit peptide. PPR repeat units lie at residues 238–268 (SKTTCNILLTSLVRANEFQKCCEAFDVVCKG), 272–306 (DVYLFTTAINAFCKGGKVEEAVKLFSKMEEAGVAP), 307–341 (NVVTFNTVIDGLGMCGRYDEAFMFKEKMVERGMEP), 342–376 (TLITYSILVKGLTRAKRIGDAYFVLKEMTKKGFPP), 377–411 (NVIVYNNLIDSFIEAGSLNKAIEIKDLMVSKGLSL), 412–446 (TSSTYNTLIKGYCKNGQADNAERLLKEMLSIGFNV), 447–481 (NQGSFTSVICLLCSHLMFDSALRFVGEMLLRNMSP), 482–516 (GGGLLTTLISGLCKHGKHSKALELWFQFLNKGFVV), 517–551 (DTRTSNALLHGLCEAGKLDEAFRIQKEILGRGCVM), 552–586 (DRVSYNTLISGCCGKKKLDEAFMFLDEMVKRGLKP), 587–621 (DNYTYSILICGLFNMNKVEEAIQFWDDCKRNGMLP), 622–656 (DVYTYSVMIDGCCKAERTEEGQEFFDEMMSKNVQP), 657–691 (NTVVYNHLIRAYCRSGRLSMALELREDMKHKGISP), 692–726 (NSATYTSLIKGMSIISRVEEAKLLFEEMRMEGLEP), 727–761 (NVFHYTALIDGYGKLGQMVKVECLLREMHSKNVHP), and 762–796 (NKITYTVMIGGYARDGNVTEASRLLNEMREKGIVP).

This sequence belongs to the PPR family. P subfamily.

The protein localises to the plastid. Its subcellular location is the chloroplast. The sequence is that of Pentatricopeptide repeat-containing protein At4g19440, chloroplastic from Arabidopsis thaliana (Mouse-ear cress).